A 218-amino-acid chain; its full sequence is Adenylate kinase (218 aa).

Residue 10 to 15 coordinates ATP; the sequence is GAGKGT. An NMP region spans residues 30-59; sequence STGDMLRAAVKAGTPLGIEAKKVMDAGGLV. Residues Thr-31, Arg-36, 57–59, 85–88, and Gln-92 each bind AMP; these read GLV and GFPR. The interval 122 to 159 is LID; the sequence is GRRSHAASGRTYHVKFNPPKVAGVDDVTGEPLIQRDDD. Residues Arg-123 and 132-133 each bind ATP; that span reads TY. AMP contacts are provided by Arg-156 and Arg-167. Gly-203 is a binding site for ATP.

This sequence belongs to the adenylate kinase family. Monomer.

It localises to the cytoplasm. It carries out the reaction AMP + ATP = 2 ADP. It functions in the pathway purine metabolism; AMP biosynthesis via salvage pathway; AMP from ADP: step 1/1. In terms of biological role, catalyzes the reversible transfer of the terminal phosphate group between ATP and AMP. Plays an important role in cellular energy homeostasis and in adenine nucleotide metabolism. This is Adenylate kinase from Albidiferax ferrireducens (strain ATCC BAA-621 / DSM 15236 / T118) (Rhodoferax ferrireducens).